The chain runs to 314 residues: ATP synthase gamma chain (314 aa).

Belongs to the ATPase gamma chain family. As to quaternary structure, F-type ATPases have 2 components, CF(1) - the catalytic core - and CF(0) - the membrane proton channel. CF(1) has five subunits: alpha(3), beta(3), gamma(1), delta(1), epsilon(1). CF(0) has three main subunits: a, b and c.

It is found in the cellular thylakoid membrane. In terms of biological role, produces ATP from ADP in the presence of a proton gradient across the membrane. The gamma chain is believed to be important in regulating ATPase activity and the flow of protons through the CF(0) complex. This chain is ATP synthase gamma chain, found in Picosynechococcus sp. (strain ATCC 27264 / PCC 7002 / PR-6) (Agmenellum quadruplicatum).